Here is a 349-residue protein sequence, read N- to C-terminus: Glycerol-3-phosphate dehydrogenase [NAD(+)], cytoplasmic (349 aa).

10-15 (GSGNWG) is a binding site for NAD(+). Lysine 120 lines the substrate pocket. NAD(+) is bound at residue alanine 153. The residue at position 154 (serine 154) is a Phosphoserine. Residue lysine 204 is the Proton acceptor of the active site. Residue arginine 269 coordinates NAD(+). Substrate is bound at residue 269–270 (RN). Lysine 289 is subject to N6-succinyllysine. NAD(+)-binding residues include lysine 296 and glutamine 298. Phosphotyrosine is present on tyrosine 326.

It belongs to the NAD-dependent glycerol-3-phosphate dehydrogenase family. Homodimer.

It is found in the cytoplasm. The enzyme catalyses sn-glycerol 3-phosphate + NAD(+) = dihydroxyacetone phosphate + NADH + H(+). In terms of biological role, has glycerol-3-phosphate dehydrogenase activity. The chain is Glycerol-3-phosphate dehydrogenase [NAD(+)], cytoplasmic from Mus musculus (Mouse).